We begin with the raw amino-acid sequence, 148 residues long: Nucleoside diphosphate kinase B (148 aa).

Positions 9, 57, 85, 91, 102, and 112 each coordinate ATP. The active-site Pros-phosphohistidine intermediate is the H115.

This sequence belongs to the NDK family. Requires Mg(2+) as cofactor.

It carries out the reaction a 2'-deoxyribonucleoside 5'-diphosphate + ATP = a 2'-deoxyribonucleoside 5'-triphosphate + ADP. The enzyme catalyses a ribonucleoside 5'-diphosphate + ATP = a ribonucleoside 5'-triphosphate + ADP. In terms of biological role, major role in the synthesis of nucleoside triphosphates other than ATP. The ATP gamma phosphate is transferred to the NDP beta phosphate via a ping-pong mechanism, using a phosphorylated active-site intermediate. This chain is Nucleoside diphosphate kinase B, found in Flaveria bidentis (Coastal plain yellowtops).